We begin with the raw amino-acid sequence, 396 residues long: 1-deoxy-D-xylulose 5-phosphate reductoisomerase (396 aa).

6 residues coordinate NADPH: Thr-15, Gly-16, Ser-17, Ile-18, Gly-41, and Asn-130. Residue Lys-131 coordinates 1-deoxy-D-xylulose 5-phosphate. Residue Glu-132 coordinates NADPH. Asp-155 is a Mn(2+) binding site. 4 residues coordinate 1-deoxy-D-xylulose 5-phosphate: Ser-156, Glu-157, Ser-181, and His-204. Glu-157 contacts Mn(2+). Gly-210 is a binding site for NADPH. Residues Ser-217, Asn-222, Lys-223, and Glu-226 each contribute to the 1-deoxy-D-xylulose 5-phosphate site. Glu-226 provides a ligand contact to Mn(2+).

This sequence belongs to the DXR family. Mg(2+) serves as cofactor. It depends on Mn(2+) as a cofactor.

It carries out the reaction 2-C-methyl-D-erythritol 4-phosphate + NADP(+) = 1-deoxy-D-xylulose 5-phosphate + NADPH + H(+). It functions in the pathway isoprenoid biosynthesis; isopentenyl diphosphate biosynthesis via DXP pathway; isopentenyl diphosphate from 1-deoxy-D-xylulose 5-phosphate: step 1/6. Catalyzes the NADPH-dependent rearrangement and reduction of 1-deoxy-D-xylulose-5-phosphate (DXP) to 2-C-methyl-D-erythritol 4-phosphate (MEP). The polypeptide is 1-deoxy-D-xylulose 5-phosphate reductoisomerase (Bifidobacterium longum (strain NCC 2705)).